Here is a 115-residue protein sequence, read N- to C-terminus: Large ribosomal subunit protein bL19 (115 aa).

The protein belongs to the bacterial ribosomal protein bL19 family.

This protein is located at the 30S-50S ribosomal subunit interface and may play a role in the structure and function of the aminoacyl-tRNA binding site. The chain is Large ribosomal subunit protein bL19 from Bacillus licheniformis (strain ATCC 14580 / DSM 13 / JCM 2505 / CCUG 7422 / NBRC 12200 / NCIMB 9375 / NCTC 10341 / NRRL NRS-1264 / Gibson 46).